The primary structure comprises 308 residues: Porphobilinogen deaminase (308 aa).

An S-(dipyrrolylmethanemethyl)cysteine modification is found at cysteine 240.

The protein belongs to the HMBS family. As to quaternary structure, monomer. Dipyrromethane is required as a cofactor.

The catalysed reaction is 4 porphobilinogen + H2O = hydroxymethylbilane + 4 NH4(+). Its pathway is porphyrin-containing compound metabolism; protoporphyrin-IX biosynthesis; coproporphyrinogen-III from 5-aminolevulinate: step 2/4. Its function is as follows. Tetrapolymerization of the monopyrrole PBG into the hydroxymethylbilane pre-uroporphyrinogen in several discrete steps. The chain is Porphobilinogen deaminase from Desulfitobacterium hafniense (strain DSM 10664 / DCB-2).